Reading from the N-terminus, the 129-residue chain is Aspartate 1-decarboxylase (129 aa).

Serine 25 (schiff-base intermediate with substrate; via pyruvic acid) is an active-site residue. A Pyruvic acid (Ser) modification is found at serine 25. Threonine 57 is a substrate binding site. Catalysis depends on tyrosine 58, which acts as the Proton donor. Position 73 to 75 (glycine 73 to alanine 75) interacts with substrate.

It belongs to the PanD family. As to quaternary structure, heterooctamer of four alpha and four beta subunits. Pyruvate is required as a cofactor. In terms of processing, is synthesized initially as an inactive proenzyme, which is activated by self-cleavage at a specific serine bond to produce a beta-subunit with a hydroxyl group at its C-terminus and an alpha-subunit with a pyruvoyl group at its N-terminus.

The protein resides in the cytoplasm. The catalysed reaction is L-aspartate + H(+) = beta-alanine + CO2. The protein operates within cofactor biosynthesis; (R)-pantothenate biosynthesis; beta-alanine from L-aspartate: step 1/1. Its function is as follows. Catalyzes the pyruvoyl-dependent decarboxylation of aspartate to produce beta-alanine. The protein is Aspartate 1-decarboxylase of Hydrogenovibrio crunogenus (strain DSM 25203 / XCL-2) (Thiomicrospira crunogena).